A 320-amino-acid polypeptide reads, in one-letter code: ATP-dependent 6-phosphofructokinase (320 aa).

Gly12 contacts ATP. 22–26 (RAVVR) contacts ADP. ATP contacts are provided by residues 73–74 (RF) and 103–106 (GDGS). Asp104 is a Mg(2+) binding site. Residue 126–128 (TID) coordinates substrate. Asp128 functions as the Proton acceptor in the catalytic mechanism. Residue Arg155 coordinates ADP. Residues Arg163 and 170–172 (MGR) contribute to the substrate site. Residues 186 to 188 (GAE) and 214 to 216 (KNH) contribute to the ADP site. Substrate is bound by residues Glu223, Arg244, and 250–253 (HIQR).

The protein belongs to the phosphofructokinase type A (PFKA) family. ATP-dependent PFK group I subfamily. Prokaryotic clade 'B1' sub-subfamily. Homotetramer. Requires Mg(2+) as cofactor.

It localises to the cytoplasm. The enzyme catalyses beta-D-fructose 6-phosphate + ATP = beta-D-fructose 1,6-bisphosphate + ADP + H(+). The protein operates within carbohydrate degradation; glycolysis; D-glyceraldehyde 3-phosphate and glycerone phosphate from D-glucose: step 3/4. Its activity is regulated as follows. Allosterically activated by ADP and other diphosphonucleosides, and allosterically inhibited by phosphoenolpyruvate. In terms of biological role, catalyzes the phosphorylation of D-fructose 6-phosphate to fructose 1,6-bisphosphate by ATP, the first committing step of glycolysis. The chain is ATP-dependent 6-phosphofructokinase from Teredinibacter turnerae (strain ATCC 39867 / T7901).